The sequence spans 443 residues: Xaa-Pro dipeptidase (443 aa).

Residues aspartate 248, aspartate 259, histidine 339, glutamate 384, and glutamate 423 each contribute to the Mn(2+) site.

It belongs to the peptidase M24B family. Bacterial-type prolidase subfamily. Requires Mn(2+) as cofactor.

The catalysed reaction is Xaa-L-Pro dipeptide + H2O = an L-alpha-amino acid + L-proline. In terms of biological role, splits dipeptides with a prolyl residue in the C-terminal position. The chain is Xaa-Pro dipeptidase from Colwellia psychrerythraea (strain 34H / ATCC BAA-681) (Vibrio psychroerythus).